The chain runs to 1548 residues: Multidrug resistance protein (1548 aa).

Over 1-238 (MVDNGHVTIA…YHVWAQILPK (238 aa)) the chain is Cytoplasmic. The ABC transmembrane type-1 1 domain maps to 231–514 (VWAQILPKLL…IPIIISSILQ (284 aa)). The chain crosses the membrane as a helical span at residues 239-256 (LLSDVTALMLPVLLEYFV). The N-linked (GlcNAc...) asparagine glycan is linked to Asn263. 5 consecutive transmembrane segments (helical) span residues 266 to 287 (WGWG…SCSA), 349 to 367 (VMYF…LLLI), 375 to 392 (VPGM…AVIS), 463 to 480 (ATPT…HVSG), and 500 to 519 (VSFF…FVSA). The Cytoplasmic segment spans residues 520–932 (KRVTAFIECP…PWSTYVAYLK (413 aa)). An ABC transporter 1 domain is found at 634–855 (VEEGDREYYQ…ALEETLRGEL (222 aa)). 667–674 (GSTGSGKS) provides a ligand contact to ATP. The next 4 helical transmembrane spans lie at 933-950 (SCGG…FALT), 975-993 (TYLY…GSPL), 1051-1070 (GYLY…IIMV), and 1072-1088 (VQPF…YSYY). One can recognise an ABC transmembrane type-1 2 domain in the interval 940-1221 (WGCLLATFAL…LVRQVAMVEA (282 aa)). Residues Asn1095 and Asn1154 are each glycosylated (N-linked (GlcNAc...) asparagine). 2 helical membrane passes run 1164 to 1182 (LEFL…GVIG) and 1186 to 1205 (GASS…SMTL). Over 1206–1548 (TETLNWLVRQ…RIVQPAVLSD (343 aa)) the chain is Cytoplasmic. Residues 1286–1521 (LVLEGVQMRY…HQSMFHSMVE (236 aa)) enclose the ABC transporter 2 domain. ATP is bound at residue 1320 to 1327 (GRTGSGKS).

The protein belongs to the ABC transporter superfamily. ABCB family. Multidrug resistance exporter (TC 3.A.1.201) subfamily.

The protein localises to the membrane. The catalysed reaction is ATP + H2O + xenobioticSide 1 = ADP + phosphate + xenobioticSide 2.. This Leishmania tarentolae (Sauroleishmania tarentolae) protein is Multidrug resistance protein (PGPA).